The following is a 140-amino-acid chain: Small ribosomal subunit protein uS19 (140 aa).

The tract at residues 43–71 (IERGLTTEQQKLRETVRDADPQKTANDPI) is disordered. Basic and acidic residues predominate over residues 52–63 (QKLRETVRDADP).

Belongs to the universal ribosomal protein uS19 family.

Functionally, protein S19 forms a complex with S13 that binds strongly to the 16S ribosomal RNA. This is Small ribosomal subunit protein uS19 from Haloquadratum walsbyi (strain DSM 16790 / HBSQ001).